The primary structure comprises 360 residues: Histidinol-phosphate aminotransferase (360 aa).

The residue at position 222 (Lys-222) is an N6-(pyridoxal phosphate)lysine.

It belongs to the class-II pyridoxal-phosphate-dependent aminotransferase family. Histidinol-phosphate aminotransferase subfamily. In terms of assembly, homodimer. Pyridoxal 5'-phosphate is required as a cofactor.

It catalyses the reaction L-histidinol phosphate + 2-oxoglutarate = 3-(imidazol-4-yl)-2-oxopropyl phosphate + L-glutamate. It participates in amino-acid biosynthesis; L-histidine biosynthesis; L-histidine from 5-phospho-alpha-D-ribose 1-diphosphate: step 7/9. In Listeria monocytogenes serotype 4b (strain F2365), this protein is Histidinol-phosphate aminotransferase.